The sequence spans 204 residues: Salt stress root protein RS1 (204 aa).

Residues 128–204 (FVPKEEPKPE…AAPAAEPEKQ (77 aa)) form a disordered region. Residues 147–161 (TSREVAVEEEKKEEE) are compositionally biased toward basic and acidic residues. Residues 164–180 (PAEPAAAAAEAAAPSTE) show a composition bias toward low complexity. Residues 182 to 192 (VEEKKEEEKPA) are compositionally biased toward basic and acidic residues. A compositionally biased stretch (low complexity) spans 193–204 (EAAAPAAEPEKQ).

It belongs to the DREPP family.

The sequence is that of Salt stress root protein RS1 from Oryza sativa subsp. indica (Rice).